Consider the following 378-residue polypeptide: Succinyl-diaminopimelate desuccinylase 2 (378 aa).

Residue histidine 68 participates in Zn(2+) binding. Residue aspartate 70 is part of the active site. Aspartate 101 contributes to the Zn(2+) binding site. Glutamate 135 (proton acceptor) is an active-site residue. 3 residues coordinate Zn(2+): glutamate 136, glutamate 164, and histidine 350.

This sequence belongs to the peptidase M20A family. DapE subfamily. In terms of assembly, homodimer. The cofactor is Zn(2+). It depends on Co(2+) as a cofactor.

The catalysed reaction is N-succinyl-(2S,6S)-2,6-diaminopimelate + H2O = (2S,6S)-2,6-diaminopimelate + succinate. It functions in the pathway amino-acid biosynthesis; L-lysine biosynthesis via DAP pathway; LL-2,6-diaminopimelate from (S)-tetrahydrodipicolinate (succinylase route): step 3/3. In terms of biological role, catalyzes the hydrolysis of N-succinyl-L,L-diaminopimelic acid (SDAP), forming succinate and LL-2,6-diaminopimelate (DAP), an intermediate involved in the bacterial biosynthesis of lysine and meso-diaminopimelic acid, an essential component of bacterial cell walls. The polypeptide is Succinyl-diaminopimelate desuccinylase 2 (Alteromonas mediterranea (strain DSM 17117 / CIP 110805 / LMG 28347 / Deep ecotype)).